A 676-amino-acid polypeptide reads, in one-letter code: Envelope glycoprotein (676 aa).

The N-terminal stretch at 1–32 is a signal peptide; that stretch reads MGASGILQLPRERFRKTSFFVWVIILFHKVFS. Topologically, residues 33-650 are extracellular; sequence IPLGVVHNNT…GSNWWTGWKQ (618 aa). Residue Asn-40 is glycosylated (N-linked (GlcNAc...) asparagine; by host). Disulfide bonds link Cys-53/Cys-609, Cys-108/Cys-135, Cys-121/Cys-147, Cys-511/Cys-556, and Cys-601/Cys-608. The receptor-binding stretch occupies residues 54-201; sequence RDKLSSTSQL…DFFQSPPLHE (148 aa). Asn-204, Asn-228, Asn-257, Asn-268, and Asn-296 each carry an N-linked (GlcNAc...) asparagine; by host glycan. Residues 305-485 are mucin-like region; sequence ELSFVPVPET…LSGPGFLTNT (181 aa). The tract at residues 356–463 is disordered; that stretch reads IKGKDTMPTT…PTTLPEQHTA (108 aa). Over residues 361-374 the composition is skewed to low complexity; the sequence is TMPTTVTGVPTTTP. Polar residues predominate over residues 402–422; that stretch reads TTQPAKTTSQPTNSTESTTLN. N-linked (GlcNAc...) asparagine; by host glycosylation occurs at Asn-414. Low complexity predominate over residues 423–440; it reads PTSEPSSRGTGPSSPTVP. N-linked (GlcNAc...) asparagine; by host glycosylation is present at Asn-441. The segment covering 452 to 463 has biased composition (polar residues); sequence TTPTTLPEQHTA. The segment at 524 to 539 is fusion peptide; that stretch reads GAAIGLAWIPYFGPAA. A coiled-coil region spans residues 554–595; it reads LICGLRQLANETTQALQLFLRATTELRTFSILNRKAIDFLLQ. An N-linked (GlcNAc...) asparagine; by host glycan is attached at Asn-563. Positions 615–634 form a coiled coil; sequence WTKNITDKIDQIIHDFVDNN. Asn-618 is a glycosylation site (N-linked (GlcNAc...) asparagine; by host). A helical membrane pass occupies residues 651–671; the sequence is WVPAGIGITGVIIAIIALLCI. 2 S-palmitoyl cysteine; by host lipidation sites follow: Cys-670 and Cys-672. Residues 672-676 are Cytoplasmic-facing; that stretch reads CKFML.

This sequence belongs to the filoviruses glycoprotein family. Homotrimer; each monomer consists of a GP1 and a GP2 subunit linked by disulfide bonds. The resulting peplomers (GP1,2) protrude from the virus surface as spikes. GP1 and GP2delta are part of GP1,2delta soluble complexes released by ectodomain shedding. GP1,2 interacts with host integrin ITGAV/alpha-V and CLEC10A. Also binds human CD209 and CLEC4M (collectively referred to as DC-SIGN(R)), as well as human FOLR1. Interacts with host entry receptor NPC1. Post-translationally, the signal peptide region modulates GP's high mannose glycosylation, thereby determining the efficiency of the interactions with DC-SIGN(R). In terms of processing, N-glycosylated. O-glycosylated in the mucin-like region. Post-translationally, palmitoylation of GP2 is not required for its function. In terms of processing, specific enzymatic cleavages in vivo yield mature proteins. The precursor is processed into GP1 and GP2 by host cell furin in the trans Golgi, and maybe by other host proteases, to yield the mature GP1 and GP2 proteins. The cleavage site corresponds to the furin optimal cleavage sequence [KR]-X-[KR]-R. This cleavage does not seem to be required for function. After the internalization of the virus into cell endosomes, GP1 C-terminus is removed by the endosomal proteases cathepsin B, cathepsin L, or both, leaving a 19-kDa N-terminal fragment which is further digested by cathepsin B. Proteolytic processing of GP1,2 by host ADAM17 can remove the transmembrane anchor of GP2 and leads to shedding of complexes consisting in GP1 and truncated GP2 (GP1,2delta).

The protein resides in the virion membrane. The protein localises to the host cell membrane. It is found in the secreted. Functionally, GP1 is responsible for binding to the receptor(s) on target cells. Interacts with CD209/DC-SIGN and CLEC4M/DC-SIGNR which act as cofactors for virus entry into the host cell. Binding to CD209 and CLEC4M, which are respectively found on dendritic cells (DCs), and on endothelial cells of liver sinusoids and lymph node sinuses, facilitate infection of macrophages and endothelial cells. These interactions not only facilitate virus cell entry, but also allow capture of viral particles by DCs and subsequent transmission to susceptible cells without DCs infection (trans infection). Binding to the macrophage specific lectin CLEC10A also seems to enhance virus infectivity. Interaction with FOLR1/folate receptor alpha may be a cofactor for virus entry in some cell types, although results are contradictory. Members of the Tyro3 receptor tyrosine kinase family also seem to be cell entry factors in filovirus infection. Once attached, the virions are internalized through clathrin-dependent endocytosis and/or macropinocytosis. After internalization of the virus into the endosomes of the host cell, proteolysis of GP1 by two cysteine proteases, CTSB/cathepsin B and CTSL/cathepsin L presumably induces a conformational change of GP2, unmasking its fusion peptide and initiating membranes fusion. Its function is as follows. GP2 acts as a class I viral fusion protein. Under the current model, the protein has at least 3 conformational states: pre-fusion native state, pre-hairpin intermediate state, and post-fusion hairpin state. During viral and target cell membrane fusion, the coiled coil regions (heptad repeats) assume a trimer-of-hairpins structure, positioning the fusion peptide in close proximity to the C-terminal region of the ectodomain. The formation of this structure appears to drive apposition and subsequent fusion of viral and target cell membranes. Responsible for penetration of the virus into the cell cytoplasm by mediating the fusion of the membrane of the endocytosed virus particle with the endosomal membrane. Low pH in endosomes induces an irreversible conformational change in GP2, releasing the fusion hydrophobic peptide. GP1,2 which is the disulfid-linked complex of GP1 and GP2, mediates endothelial cell activation and decreases endothelial barrier function. Mediates activation of primary macrophages. At terminal stages of the viral infection, when its expression is high, GP1,2 down-modulates the expression of various host cell surface molecules that are essential for immune surveillance and cell adhesion. Down-modulates integrins ITGA1, ITGA2, ITGA3, ITGA4, ITGA5, ITGA6, ITGAV and ITGB1. GP1,2 alters the cellular recycling of the dimer alpha-V/beta-3 via a dynamin-dependent pathway. Decrease in the host cell surface expression of various adhesion molecules may lead to cell detachment, contributing to the disruption of blood vessel integrity and hemorrhages developed during Ebola virus infection (cytotoxicity). This cytotoxicity appears late in the infection, only after the massive release of viral particles by infected cells. Down-modulation of host MHC-I, leading to altered recognition by immune cells, may explain the immune suppression and inflammatory dysfunction linked to Ebola infection. Also down-modulates EGFR surface expression. Counteracts the antiviral effect of host tetherin. In terms of biological role, GP2delta is part of the complex GP1,2delta released by host ADAM17 metalloprotease. This secreted complex may play a role in the pathogenesis of the virus by efficiently blocking the neutralizing antibodies that would otherwise neutralize the virus surface glycoproteins GP1,2. Might therefore contribute to the lack of inflammatory reaction seen during infection in spite the of extensive necrosis and massive virus production. GP1,2delta does not seem to be involved in activation of primary macrophages. The polypeptide is Envelope glycoprotein (GP) (Tai Forest ebolavirus (strain Cote d'Ivoire-94) (TAFV)).